The primary structure comprises 145 residues: Large ribosomal subunit protein uL11 (145 aa).

It belongs to the universal ribosomal protein uL11 family. As to quaternary structure, part of the ribosomal stalk of the 50S ribosomal subunit. Interacts with L10 and the large rRNA to form the base of the stalk. L10 forms an elongated spine to which L12 dimers bind in a sequential fashion forming a multimeric L10(L12)X complex. Post-translationally, one or more lysine residues are methylated.

In terms of biological role, forms part of the ribosomal stalk which helps the ribosome interact with GTP-bound translation factors. The polypeptide is Large ribosomal subunit protein uL11 (Rickettsia prowazekii (strain Madrid E)).